A 159-amino-acid polypeptide reads, in one-letter code: Ribosomal RNA large subunit methyltransferase H (159 aa).

Residues Leu76, Gly108, and 127-132 (FGRLTL) contribute to the S-adenosyl-L-methionine site.

Belongs to the RNA methyltransferase RlmH family. As to quaternary structure, homodimer.

The protein localises to the cytoplasm. It catalyses the reaction pseudouridine(1915) in 23S rRNA + S-adenosyl-L-methionine = N(3)-methylpseudouridine(1915) in 23S rRNA + S-adenosyl-L-homocysteine + H(+). In terms of biological role, specifically methylates the pseudouridine at position 1915 (m3Psi1915) in 23S rRNA. This is Ribosomal RNA large subunit methyltransferase H from Streptococcus uberis (strain ATCC BAA-854 / 0140J).